The chain runs to 248 residues: 1-(5-phosphoribosyl)-5-[(5-phosphoribosylamino)methylideneamino] imidazole-4-carboxamide isomerase (248 aa).

The active-site Proton acceptor is the Asp-11. Catalysis depends on Asp-132, which acts as the Proton donor.

The protein belongs to the HisA/HisF family.

It is found in the cytoplasm. It carries out the reaction 1-(5-phospho-beta-D-ribosyl)-5-[(5-phospho-beta-D-ribosylamino)methylideneamino]imidazole-4-carboxamide = 5-[(5-phospho-1-deoxy-D-ribulos-1-ylimino)methylamino]-1-(5-phospho-beta-D-ribosyl)imidazole-4-carboxamide. Its pathway is amino-acid biosynthesis; L-histidine biosynthesis; L-histidine from 5-phospho-alpha-D-ribose 1-diphosphate: step 4/9. The protein is 1-(5-phosphoribosyl)-5-[(5-phosphoribosylamino)methylideneamino] imidazole-4-carboxamide isomerase of Bradyrhizobium diazoefficiens (strain JCM 10833 / BCRC 13528 / IAM 13628 / NBRC 14792 / USDA 110).